The sequence spans 224 residues: Ribonuclease 3 (224 aa).

In terms of domain architecture, RNase III spans 4-127; the sequence is IEKLEQSLTY…IIGAIHLEAG (124 aa). Glu40 lines the Mg(2+) pocket. The active site involves Asp44. Mg(2+) is bound by residues Asp113 and Glu116. The active site involves Glu116. One can recognise a DRBM domain in the interval 154-223; the sequence is DYKTKLQEIT…AKIALEKLGA (70 aa).

The protein belongs to the ribonuclease III family. Homodimer. Requires Mg(2+) as cofactor.

The protein localises to the cytoplasm. It carries out the reaction Endonucleolytic cleavage to 5'-phosphomonoester.. Functionally, digests double-stranded RNA. Involved in the processing of primary rRNA transcript to yield the immediate precursors to the large and small rRNAs (23S and 16S). Processes some mRNAs, and tRNAs when they are encoded in the rRNA operon. Processes pre-crRNA and tracrRNA of type II CRISPR loci if present in the organism. In Campylobacter jejuni subsp. jejuni serotype O:6 (strain 81116 / NCTC 11828), this protein is Ribonuclease 3.